We begin with the raw amino-acid sequence, 255 residues long: Putative keratin-87 protein (255 aa).

The IF rod domain occupies methionine 1–leucine 255. Coiled-coil stretches lie at residues leucine 19 to valine 81 and leucine 147 to serine 227.

It belongs to the intermediate filament family. In terms of assembly, heterotetramer of two type I and two type II keratins.

The polypeptide is Putative keratin-87 protein (KRT87P) (Homo sapiens (Human)).